The following is a 192-amino-acid chain: MSTTVDVPESSNVAKGKAIAVARPGGWKKGLAIMDFILRLGGIAASLGAAATMGTSDQTLPFFTQFFQFEASYDSFTTFQFFVITMALVAGYLVLSLPFSVVAIIRPHAPGPRLFLIILDTVFLTLATASGASAAAIVYLAHNGNQDSNWLAICNQFGDFCAQTSGAVVASFVAVVILVLLVIMSALALRRH.

At 1 to 30 (MSTTVDVPESSNVAKGKAIAVARPGGWKKG) the chain is on the cytoplasmic side. A helical transmembrane segment spans residues 31–51 (LAIMDFILRLGGIAASLGAAA). The Extracellular segment spans residues 52–80 (TMGTSDQTLPFFTQFFQFEASYDSFTTFQ). The chain crosses the membrane as a helical span at residues 81-101 (FFVITMALVAGYLVLSLPFSV). At 102–113 (VAIIRPHAPGPR) the chain is on the cytoplasmic side. Residues 114-134 (LFLIILDTVFLTLATASGASA) traverse the membrane as a helical segment. The Extracellular segment spans residues 135-166 (AAIVYLAHNGNQDSNWLAICNQFGDFCAQTSG). Residues 167–187 (AVVASFVAVVILVLLVIMSAL) form a helical membrane-spanning segment. Topologically, residues 188-192 (ALRRH) are cytoplasmic.

It belongs to the Casparian strip membrane proteins (CASP) family. Homodimer and heterodimers.

Its subcellular location is the cell membrane. Regulates membrane-cell wall junctions and localized cell wall deposition. Required for establishment of the Casparian strip membrane domain (CSD) and the subsequent formation of Casparian strips, a cell wall modification of the root endodermis that determines an apoplastic barrier between the intraorganismal apoplasm and the extraorganismal apoplasm and prevents lateral diffusion. The protein is Casparian strip membrane protein 1 of Vigna unguiculata (Cowpea).